The primary structure comprises 163 residues: N5-carboxyaminoimidazole ribonucleotide mutase (163 aa).

Positions 11, 14, and 41 each coordinate substrate.

Belongs to the AIR carboxylase family. Class I subfamily.

The catalysed reaction is 5-carboxyamino-1-(5-phospho-D-ribosyl)imidazole + H(+) = 5-amino-1-(5-phospho-D-ribosyl)imidazole-4-carboxylate. It functions in the pathway purine metabolism; IMP biosynthesis via de novo pathway; 5-amino-1-(5-phospho-D-ribosyl)imidazole-4-carboxylate from 5-amino-1-(5-phospho-D-ribosyl)imidazole (N5-CAIR route): step 2/2. Its function is as follows. Catalyzes the conversion of N5-carboxyaminoimidazole ribonucleotide (N5-CAIR) to 4-carboxy-5-aminoimidazole ribonucleotide (CAIR). This is N5-carboxyaminoimidazole ribonucleotide mutase from Pseudomonas aeruginosa (strain ATCC 15692 / DSM 22644 / CIP 104116 / JCM 14847 / LMG 12228 / 1C / PRS 101 / PAO1).